The following is a 109-amino-acid chain: MKVSAVLKNARVSAQKARLVADLIRGKSVEQALNTLTFTPKKSAVLMKKVLESAIANAEHNEGADIDTLKVATVYVDKGPSLKRFTARAKGRGNRIEKQTCHITLVVGN.

Belongs to the universal ribosomal protein uL22 family. In terms of assembly, part of the 50S ribosomal subunit.

This protein binds specifically to 23S rRNA; its binding is stimulated by other ribosomal proteins, e.g. L4, L17, and L20. It is important during the early stages of 50S assembly. It makes multiple contacts with different domains of the 23S rRNA in the assembled 50S subunit and ribosome. Functionally, the globular domain of the protein is located near the polypeptide exit tunnel on the outside of the subunit, while an extended beta-hairpin is found that lines the wall of the exit tunnel in the center of the 70S ribosome. In Laribacter hongkongensis (strain HLHK9), this protein is Large ribosomal subunit protein uL22.